We begin with the raw amino-acid sequence, 266 residues long: Glucosamine-6-phosphate deaminase (266 aa).

Aspartate 72 acts as the Proton acceptor; for enolization step in catalysis. Aspartate 141 acts as the For ring-opening step in catalysis. The active-site Proton acceptor; for ring-opening step is the histidine 143. Catalysis depends on glutamate 148, which acts as the For ring-opening step.

Belongs to the glucosamine/galactosamine-6-phosphate isomerase family. NagB subfamily. As to quaternary structure, homohexamer.

The enzyme catalyses alpha-D-glucosamine 6-phosphate + H2O = beta-D-fructose 6-phosphate + NH4(+). It participates in amino-sugar metabolism; N-acetylneuraminate degradation; D-fructose 6-phosphate from N-acetylneuraminate: step 5/5. With respect to regulation, allosterically activated by N-acetylglucosamine 6-phosphate (GlcNAc6P). In terms of biological role, catalyzes the reversible isomerization-deamination of glucosamine 6-phosphate (GlcN6P) to form fructose 6-phosphate (Fru6P) and ammonium ion. The protein is Glucosamine-6-phosphate deaminase of Yersinia pestis bv. Antiqua (strain Antiqua).